A 197-amino-acid chain; its full sequence is MRFDAADAHWRETPRPGASGAQKDWLTRGGSLTAHLARLGRVTVRVTREAVATPWADERGALACAPRAPVWVREVVLAVDGTPFVAAHSIAPLAASKGVWQAMRRLRTRPLAELLYSDPEVTRSALVSRRVIAGHPLFALASHALSPGHATPHAFAARRSVFERRGTPLMVTECMLPALWRHLDAHGERRARDFEGA.

The segment covering 1–14 has biased composition (basic and acidic residues); sequence MRFDAADAHWRETP. The interval 1–25 is disordered; the sequence is MRFDAADAHWRETPRPGASGAQKDW. Residues Arg73, Leu111, and Glu173 each coordinate substrate.

The protein belongs to the UbiC family.

It is found in the cytoplasm. The catalysed reaction is chorismate = 4-hydroxybenzoate + pyruvate. It participates in cofactor biosynthesis; ubiquinone biosynthesis. In terms of biological role, removes the pyruvyl group from chorismate, with concomitant aromatization of the ring, to provide 4-hydroxybenzoate (4HB) for the ubiquinone pathway. The protein is Probable chorismate pyruvate-lyase of Burkholderia thailandensis (strain ATCC 700388 / DSM 13276 / CCUG 48851 / CIP 106301 / E264).